Here is a 233-residue protein sequence, read N- to C-terminus: Biosynthetic peptidoglycan transglycosylase (233 aa).

Residues 8–28 (LIALPVGIFIFFNAYVYGNII) traverse the membrane as a helical segment.

It belongs to the glycosyltransferase 51 family.

The protein resides in the cell inner membrane. It catalyses the reaction [GlcNAc-(1-&gt;4)-Mur2Ac(oyl-L-Ala-gamma-D-Glu-L-Lys-D-Ala-D-Ala)](n)-di-trans,octa-cis-undecaprenyl diphosphate + beta-D-GlcNAc-(1-&gt;4)-Mur2Ac(oyl-L-Ala-gamma-D-Glu-L-Lys-D-Ala-D-Ala)-di-trans,octa-cis-undecaprenyl diphosphate = [GlcNAc-(1-&gt;4)-Mur2Ac(oyl-L-Ala-gamma-D-Glu-L-Lys-D-Ala-D-Ala)](n+1)-di-trans,octa-cis-undecaprenyl diphosphate + di-trans,octa-cis-undecaprenyl diphosphate + H(+). The protein operates within cell wall biogenesis; peptidoglycan biosynthesis. Its function is as follows. Peptidoglycan polymerase that catalyzes glycan chain elongation from lipid-linked precursors. This chain is Biosynthetic peptidoglycan transglycosylase, found in Neisseria gonorrhoeae (strain NCCP11945).